The following is a 125-amino-acid chain: Transmembrane protein 14EP (125 aa).

The next 2 membrane-spanning stretches (helical) occupy residues 9 to 29 and 81 to 101; these read VPLY…GISG and ILTL…LIVS.

It belongs to the TMEM14 family.

It is found in the membrane. This Homo sapiens (Human) protein is Transmembrane protein 14EP (TMEM14EP).